We begin with the raw amino-acid sequence, 311 residues long: Cathepsin B (311 aa).

Positions 1–19 (MRVLLSLVVILFIINSAFA) are cleaved as a signal peptide. The propeptide occupies 20–78 (VKINIGRPTKSHKTIHHETWVEEQTDQFDNIKVGQLLGFKRSPNRPKLQIKSYDPLGVQ). The N-linked (GlcNAc...) asparagine glycan is linked to asparagine 91. Cystine bridges form between cysteine 92–cysteine 121, cysteine 104–cysteine 145, cysteine 138–cysteine 191, cysteine 167–cysteine 195, and cysteine 175–cysteine 182. Residue cysteine 107 is part of the active site. Asparagine 198 carries N-linked (GlcNAc...) asparagine glycosylation. Active-site residues include histidine 261 and asparagine 281. Asparagine 290 is a glycosylation site (N-linked (GlcNAc...) asparagine).

It belongs to the peptidase C1 family.

It is found in the lysosome. It carries out the reaction Hydrolysis of proteins with broad specificity for peptide bonds. Preferentially cleaves -Arg-Arg-|-Xaa bonds in small molecule substrates (thus differing from cathepsin L). In addition to being an endopeptidase, shows peptidyl-dipeptidase activity, liberating C-terminal dipeptides.. In terms of biological role, thiol protease which is believed to participate in intracellular degradation and turnover of proteins. This chain is Cathepsin B (ctsB), found in Dictyostelium discoideum (Social amoeba).